The following is a 468-amino-acid chain: Glutamate--tRNA ligase (468 aa).

Positions 12-22 match the 'HIGH' region motif; that stretch reads PSPTGFIHLGN. Positions 244 to 248 match the 'KMSKS' region motif; sequence KMSKR. Lysine 247 is an ATP binding site.

Belongs to the class-I aminoacyl-tRNA synthetase family. Glutamate--tRNA ligase type 1 subfamily. As to quaternary structure, monomer.

It is found in the cytoplasm. It carries out the reaction tRNA(Glu) + L-glutamate + ATP = L-glutamyl-tRNA(Glu) + AMP + diphosphate. Catalyzes the attachment of glutamate to tRNA(Glu) in a two-step reaction: glutamate is first activated by ATP to form Glu-AMP and then transferred to the acceptor end of tRNA(Glu). The chain is Glutamate--tRNA ligase from Polynucleobacter necessarius subsp. necessarius (strain STIR1).